The chain runs to 210 residues: Ribosomal RNA large subunit methyltransferase E (210 aa).

Gly-64, Trp-66, Asp-84, Asn-100, and Asp-125 together coordinate S-adenosyl-L-methionine. Catalysis depends on Lys-165, which acts as the Proton acceptor.

This sequence belongs to the class I-like SAM-binding methyltransferase superfamily. RNA methyltransferase RlmE family.

It localises to the cytoplasm. It catalyses the reaction uridine(2552) in 23S rRNA + S-adenosyl-L-methionine = 2'-O-methyluridine(2552) in 23S rRNA + S-adenosyl-L-homocysteine + H(+). Functionally, specifically methylates the uridine in position 2552 of 23S rRNA at the 2'-O position of the ribose in the fully assembled 50S ribosomal subunit. In Buchnera aphidicola subsp. Baizongia pistaciae (strain Bp), this protein is Ribosomal RNA large subunit methyltransferase E.